The sequence spans 210 residues: Thymidylate kinase (210 aa).

10–17 serves as a coordination point for ATP; that stretch reads GPEGAGKS.

This sequence belongs to the thymidylate kinase family.

It catalyses the reaction dTMP + ATP = dTDP + ADP. Its function is as follows. Phosphorylation of dTMP to form dTDP in both de novo and salvage pathways of dTTP synthesis. This Pseudomonas entomophila (strain L48) protein is Thymidylate kinase.